An 836-amino-acid chain; its full sequence is Ethylene receptor 3 (836 aa).

Transmembrane regions (helical) follow at residues 137–157 (LIAA…AGLR), 166–186 (LVQF…TAFT), and 204–224 (LTAL…PQLL). Residues Cys176 and His180 each contribute to the Cu cation site. The GAF domain occupies 269–413 (DRHTVLYTTL…VVAGQVAVAL (145 aa)). Residues 416–452 (ATLLEESRAMRDRLAEQNRELLQARRDALMANEARQA) are a coiled coil. One can recognise a Histidine kinase domain in the interval 457 to 691 (MSQGMRRPIH…LVLRFQLQSP (235 aa)). A Response regulatory domain is found at 718–834 (LLIDDDDDIN…LKDELARILQ (117 aa)).

Belongs to the ethylene receptor family. It depends on Cu cation as a cofactor.

It localises to the endoplasmic reticulum membrane. It catalyses the reaction ATP + protein L-histidine = ADP + protein N-phospho-L-histidine.. Functionally, ethylene receptor related to bacterial two-component regulators. Acts as a negative regulator of ethylene signaling. May delay the transition from the vegetative stage to the floral stage by up-regulating GI (GIGANTEA) and RCN1 and cause starch accumulation in stems by down-regulating the alpha-amylase AMY3D. This chain is Ethylene receptor 3, found in Oryza sativa subsp. indica (Rice).